Here is a 104-residue protein sequence, read N- to C-terminus: Protein P3 (104 aa).

Residues leucine 77–valine 99 form a helical membrane-spanning segment.

In terms of assembly, homodimer.

Its subcellular location is the virion membrane. The sequence is that of Protein P3 (III) from Pseudoalteromonas phage PM2 (Bacteriophage PM2).